The sequence spans 358 residues: Uroporphyrinogen decarboxylase (358 aa).

Substrate is bound by residues 29–33 (RQAGR), Phe48, Asp79, Tyr155, Ser210, and His330.

Belongs to the uroporphyrinogen decarboxylase family. In terms of assembly, homodimer.

It localises to the cytoplasm. It carries out the reaction uroporphyrinogen III + 4 H(+) = coproporphyrinogen III + 4 CO2. Its pathway is porphyrin-containing compound metabolism; protoporphyrin-IX biosynthesis; coproporphyrinogen-III from 5-aminolevulinate: step 4/4. Catalyzes the decarboxylation of four acetate groups of uroporphyrinogen-III to yield coproporphyrinogen-III. The chain is Uroporphyrinogen decarboxylase from Bordetella bronchiseptica (strain ATCC BAA-588 / NCTC 13252 / RB50) (Alcaligenes bronchisepticus).